The following is a 62-amino-acid chain: Large ribosomal subunit protein bL28 (62 aa).

The protein belongs to the bacterial ribosomal protein bL28 family.

This chain is Large ribosomal subunit protein bL28, found in Helicobacter hepaticus (strain ATCC 51449 / 3B1).